A 661-amino-acid chain; its full sequence is MAFITLRRAFCHKSILWIPGAVVALKIHPASHAPKAVTDRLSVCFCSLQPELFRVRFHHAYCKNFHSEKGNDFHPVGEPWSSQAQEWNQPGQSLQNEDEEMLFRRLSYFTSFEEVLSFISALDTLPVPLAMAALLRICEIGRRDGEQRLPEGVLENRAFQALCLRCERDPSHLTNAGLVTALQSLLTLLPADPQSSLMLSLVAECQRRLQRGNLEVHHLCVLGESLAMLQGASCETLKLVVRQLQSKSVETFAPEEITSVYRILQVCPEEVDKHQMFLNTLNNFSISVVPYLSPKSISHVLTALVALDQTHALPLLIKLGKYVVRYIPRFTNEELRKVLEAFVYFGHSDRFFTEALEQHVSALCFSLDPAVASSVMGYCSRKRILSKPIFDVVSEIVVCQWDRLSPSQIAELIEPFGKLNYVPPNAPALFRKVENVLCARLHHFPPKMLLRLLHSCALIERHPVNFMSKLFSPFFLQRLQGKESYLDRLSLAQLTQLFLTSVLECPFYKGPKLLPKYQVKSFLTPCCSLETPLDLHLYKSVVIGLIDLLGSRLYFASKVLTPYYYTIDVEVKLDEDGFVLPCTVDEDIHKRVALCIDGPQRFCLDSKHLLGKEATKQRHLRLLGYQVVQLPYHELELLTSRLELVDYLQRKLFSQSSAVHW.

One can recognise an RAP domain in the interval 592–650 (VALCIDGPQRFCLDSKHLLGKEATKQRHLRLLGYQVVQLPYHELELLTSRLELVDYLQR).

The protein belongs to the FAST kinase family. As to expression, expression detected in spleen, testis, colon, heart, smooth muscle, kidney, brain, lung, liver, brown and white adipose tissue with highest expression in testis and smooth muscle.

Its subcellular location is the mitochondrion. Its function is as follows. Required for normal mitochondrial respiration. Increases steady-state levels and half-lives of a subset of mature mitochondrial mRNAs MT-ND2, MT-ND3, MT-CYTB, MT-CO2, and MT-ATP8/6. Promotes MT-CO1 mRNA translation and increases mitochondrial complex IV assembly and activity. This Mus musculus (Mouse) protein is FAST kinase domain-containing protein 3, mitochondrial (Fastkd3).